The chain runs to 294 residues: MRFVIVTGLSGAGKTQAIRSLEDLGFFCVDNLPPTLIPKFAEACYQTEGKIKKIALVIDIRGGKFFDDLFESLKYLKEEGYKYEILFLDASDEVLIKRFKESRRKHPLSPDGRILNGISMERNRLREVKDRADNIINTSELATRELREAINEIYGEQDQIENQLVITVLSFGFKYGIPLDSDLVFDVRFLPNPYYIKELKQYSGKDKKVSDYVMSFDVTNKFVNRLEDMLDFLIPNYFKEGKRQLIISIGCTGGRHRSVAIANAIYEGLKSKGHEVNIDHRDINEDIHKGGKKL.

8–15 (GLSGAGKT) provides a ligand contact to ATP. Residue 59 to 62 (DIRG) coordinates GTP.

Belongs to the RapZ-like family.

Displays ATPase and GTPase activities. The sequence is that of Nucleotide-binding protein CLK_2809 from Clostridium botulinum (strain Loch Maree / Type A3).